Reading from the N-terminus, the 772-residue chain is Acetamidase regulatory protein (772 aa).

Residues 1–16 (MSSTAQKNSLSPTGNG) show a composition bias toward polar residues. Positions 1-23 (MSSTAQKNSLSPTGNGVTKRKSG) are disordered. A DNA-binding region (zn(2)-C6 fungal-type) is located at residues 26–59 (ACVHCHRRKVRCDARIVGLPCSNCRSSGKTDCRI). Disordered stretches follow at residues 78-99 (RCRP…TISE), 114-148 (AAAP…QECH), and 627-690 (ATSE…QTAV). The segment covering 114 to 123 (AAAPPASVAP) has biased composition (low complexity). 2 stretches are compositionally biased toward polar residues: residues 124-144 (NVQS…SPQA) and 634-658 (PFSS…QHSS). Over residues 671–686 (LLPSYDSPTPDSTSLP) the composition is skewed to low complexity.

The protein localises to the nucleus. Functionally, positively regulates the expression of genes involved in the catabolism of certain amides, omega amino acids, and lactams. The protein is Acetamidase regulatory protein (amdR) of Aspergillus fumigatus (strain ATCC MYA-4609 / CBS 101355 / FGSC A1100 / Af293) (Neosartorya fumigata).